A 382-amino-acid chain; its full sequence is Chaperone protein DnaJ 2 (382 aa).

Residues Asp4–Gly68 form the J domain. The CR-type zinc finger occupies Gly132–Arg214. 8 residues coordinate Zn(2+): Cys145, Cys148, Cys162, Cys165, Cys188, Cys191, Cys202, and Cys205. 4 CXXCXGXG motif repeats span residues Cys145 to Gly152, Cys162 to Gly169, Cys188 to Gly195, and Cys202 to Gly209.

The protein belongs to the DnaJ family. In terms of assembly, homodimer. Interacts with RNase J. It depends on Zn(2+) as a cofactor.

It is found in the cytoplasm. In terms of biological role, participates actively in the response to hyperosmotic and heat shock by preventing the aggregation of stress-denatured proteins and by disaggregating proteins, also in an autonomous, DnaK-independent fashion. Unfolded proteins bind initially to DnaJ; upon interaction with the DnaJ-bound protein, DnaK hydrolyzes its bound ATP, resulting in the formation of a stable complex. GrpE releases ADP from DnaK; ATP binding to DnaK triggers the release of the substrate protein, thus completing the reaction cycle. Several rounds of ATP-dependent interactions between DnaJ, DnaK and GrpE are required for fully efficient folding. Also involved, together with DnaK and GrpE, in the DNA replication of plasmids through activation of initiation proteins. Inhibits the beta-lactamase and RNase activity of RNase J. The protein is Chaperone protein DnaJ 2 of Mycobacterium tuberculosis (strain ATCC 25618 / H37Rv).